Consider the following 602-residue polypeptide: 3-hydroxy-3-methylglutaryl-coenzyme A reductase 2 (602 aa).

A run of 2 helical transmembrane segments spans residues 44–67 and 95–115; these read ASDA…FFSV and AIVS…IGFV. Positions 116–187 are linker; sequence QTFVSRGNND…PLITSASSGE (72 aa). A glycan (N-linked (GlcNAc...) asparagine) is linked at N124. The catalytic stretch occupies residues 188–602; sequence DEEIIKSVVQ…STKDVTKASS (415 aa). The Charge relay system role is filled by E281. A glycan (N-linked (GlcNAc...) asparagine) is linked at N345. Catalysis depends on K413, which acts as the Charge relay system. N458 carries an N-linked (GlcNAc...) asparagine glycan. Residue D489 is the Charge relay system of the active site. The Proton donor role is filled by H587. N-linked (GlcNAc...) asparagine glycosylation occurs at N591.

The protein belongs to the HMG-CoA reductase family.

It is found in the endoplasmic reticulum membrane. It catalyses the reaction (R)-mevalonate + 2 NADP(+) + CoA = (3S)-3-hydroxy-3-methylglutaryl-CoA + 2 NADPH + 2 H(+). It functions in the pathway metabolic intermediate biosynthesis; (R)-mevalonate biosynthesis; (R)-mevalonate from acetyl-CoA: step 3/3. Its function is as follows. Catalyzes the synthesis of mevalonate. The specific precursor of all isoprenoid compounds present in plants. The chain is 3-hydroxy-3-methylglutaryl-coenzyme A reductase 2 (HMG2) from Solanum lycopersicum (Tomato).